The following is a 181-amino-acid chain: Cell division protein ZapC (181 aa).

The protein belongs to the ZapC family. Interacts directly with FtsZ.

The protein resides in the cytoplasm. In terms of biological role, contributes to the efficiency of the cell division process by stabilizing the polymeric form of the cell division protein FtsZ. Acts by promoting interactions between FtsZ protofilaments and suppressing the GTPase activity of FtsZ. The protein is Cell division protein ZapC of Shewanella woodyi (strain ATCC 51908 / MS32).